The sequence spans 35 residues: Alpha-amanitin proprotein 1 (35 aa).

The propeptide occupies 1 to 10 (MFDTNATRLP). The residue at position 11 (Ile11) is a (3R,4R)-4,5-dihydroxyisoleucine; in form alpha-amanitin. Ile11 carries the (3R,4S)-4-hydroxyisoleucine; in form gamma-amanitin modification. Residues 11 to 18 (IWGIGCNP) constitute a cross-link (cyclopeptide (Ile-Pro)). The 2'-cysteinyl-6'-hydroxytryptophan sulfoxide (Trp-Cys) cross-link spans 12–16 (WGIGC). At Pro18 the chain carries 4-hydroxyproline. Positions 19-35 (WTAEHVDQTLASGNDIC) are excised as a propeptide.

It belongs to the MSDIN fungal toxin family. In terms of processing, processed by the macrocyclase-peptidase enzyme POPB to yield a toxic bicyclic octapeptide. POPB first removes 10 residues from the N-terminus. Conformational trapping of the remaining peptide forces the enzyme to release this intermediate rather than proceed to macrocyclization. The enzyme rebinds the remaining peptide in a different conformation and catalyzes macrocyclization of the N-terminal 8 residues.

In terms of biological role, major toxin belonging to the bicyclic octapeptides amatoxins that acts by binding non-competitively to RNA polymerase II and greatly slowing the elongation of transcripts from target promoters. This Galerina marginata (strain CBS 339.88) protein is Alpha-amanitin proprotein 1.